We begin with the raw amino-acid sequence, 563 residues long: Membrane protein insertase YidC (563 aa).

The chain crosses the membrane as a helical span at residues 6-26 (TVLWMIFSFSLLLLWNNWQIH). The disordered stretch occupies residues 36–70 (PAPEAAATQQPKADANGTAASSTASIPSSPAAAPA). The segment covering 54-70 (AASSTASIPSSPAAAPA) has biased composition (low complexity). The next 4 helical transmembrane spans lie at 373–393 (WGWT…PLAA), 443–463 (LPMV…LASV), 482–502 (PFFI…KLNP), and 512–532 (VMMI…AGLV).

This sequence belongs to the OXA1/ALB3/YidC family. Type 1 subfamily. In terms of assembly, interacts with the Sec translocase complex via SecD. Specifically interacts with transmembrane segments of nascent integral membrane proteins during membrane integration.

It localises to the cell inner membrane. Required for the insertion and/or proper folding and/or complex formation of integral membrane proteins into the membrane. Involved in integration of membrane proteins that insert both dependently and independently of the Sec translocase complex, as well as at least some lipoproteins. Aids folding of multispanning membrane proteins. The polypeptide is Membrane protein insertase YidC (Bordetella parapertussis (strain 12822 / ATCC BAA-587 / NCTC 13253)).